A 784-amino-acid chain; its full sequence is Endonuclease MutS2 (784 aa).

335–342 (GPNTGGKT) serves as a coordination point for ATP. One can recognise a Smr domain in the interval 709 to 784 (LDLRGERYED…GTGVTIVELK (76 aa)).

It belongs to the DNA mismatch repair MutS family. MutS2 subfamily. As to quaternary structure, homodimer. Binds to stalled ribosomes, contacting rRNA.

Endonuclease that is involved in the suppression of homologous recombination and thus may have a key role in the control of bacterial genetic diversity. Functionally, acts as a ribosome collision sensor, splitting the ribosome into its 2 subunits. Detects stalled/collided 70S ribosomes which it binds and splits by an ATP-hydrolysis driven conformational change. Acts upstream of the ribosome quality control system (RQC), a ribosome-associated complex that mediates the extraction of incompletely synthesized nascent chains from stalled ribosomes and their subsequent degradation. Probably generates substrates for RQC. This chain is Endonuclease MutS2, found in Geobacillus sp. (strain WCH70).